Here is a 311-residue protein sequence, read N- to C-terminus: NAD kinase (311 aa).

D67 acts as the Proton acceptor in catalysis. Residues 67-68, R72, 140-141, R151, D170, 181-186, and Q240 contribute to the NAD(+) site; these read DG, ND, and TAYSLS. A compositionally biased stretch (basic and acidic residues) spans 278–287; it reads LKEGGSRQDD. The tract at residues 278–311 is disordered; that stretch reads LKEGGSRQDDENPAATVNPETDSKYPHSHPGSTG.

This sequence belongs to the NAD kinase family. Requires a divalent metal cation as cofactor.

It localises to the cytoplasm. It carries out the reaction NAD(+) + ATP = ADP + NADP(+) + H(+). In terms of biological role, involved in the regulation of the intracellular balance of NAD and NADP, and is a key enzyme in the biosynthesis of NADP. Catalyzes specifically the phosphorylation on 2'-hydroxyl of the adenosine moiety of NAD to yield NADP. The chain is NAD kinase from Moorella thermoacetica (strain ATCC 39073 / JCM 9320).